A 536-amino-acid polypeptide reads, in one-letter code: Proto-oncogene tyrosine-protein kinase Src (536 aa).

The interval 1–53 is disordered; that stretch reads MGSNKSKPKDASQRRRSLEPAENVHGAGGGAFPASQTPSKPASADGHRGPSAA. Residue glycine 2 is the site of N-myristoyl glycine attachment. Residues 7 to 19 show a composition bias toward basic and acidic residues; it reads KPKDASQRRRSLE. Residue serine 17 is modified to Phosphoserine. The residue at position 75 (serine 75) is a Phosphoserine; by CDK5. In terms of domain architecture, SH3 spans 84–145; the sequence is GGVTTFVALY…PSNYVAPSDS (62 aa). An SH2 domain is found at 151 to 248; the sequence is WYFGKITRRE…GLCHRLTTVC (98 aa). The residue at position 187 (tyrosine 187) is a Phosphotyrosine. A Protein kinase domain is found at 270–523; the sequence is LRLEVKLGQG…YLQAFLEDYF (254 aa). ATP-binding positions include 276-284 and lysine 298; that span reads LGQGCFGEV. Aspartate 389 serves as the catalytic Proton acceptor. Tyrosine 419 carries the post-translational modification Phosphotyrosine; by autocatalysis. Tyrosine 419 bears the Phosphotyrosine; by FAK2 mark. Residue tyrosine 530 is modified to Phosphotyrosine; by CSK.

Belongs to the protein kinase superfamily. Tyr protein kinase family. SRC subfamily. In terms of assembly, part of a complex comprised of PTPRA, BCAR1, BCAR3 (via SH2 domain) and SRC; the formation of the complex is dependent on integrin mediated-tyrosine phosphorylation of PTPRA. Interacts with DDEF1/ASAP1; via the SH3 domain. Interacts with CCPG1. Identified in a complex containing FGFR4, NCAM1, CDH2, PLCG1, FRS2, SRC, SHC1, GAP43 and CTTN. Interacts with ERBB2, STAT1 and PNN. Interacts with DDR1, DDR2 and DAB2. Interacts with CDCP1, TGFB1I1 and TOM1L2. Interacts with the cytoplasmic domain of MUC1, phosphorylates it and increases binding of MUC1 with beta-catenin. Interacts with RALGPS1; via the SH3 domain. Interacts with CAV2 (tyrosine phosphorylated form). Interacts (via the SH3 domain and the protein kinase domain) with ARRB1; the interaction is independent of the phosphorylation state of SRC C-terminus. Interacts with ARRB1 and ARRB2. Interacts with SRCIN1. Interacts with NDFIP2 and more weakly with NDFIP1. Interacts with PIK3CA and/or PIK3C2B, PTK2/FAK1 and ESR1 (dimethylated on arginine). Interacts with FASLG. Interacts (via SH2 domain) with the 'Tyr-402' phosphorylated form of PTK2B/PYK2. Interacts (via SH2 domain) with FLT3 (tyrosine phosphorylated). Interacts with PDGFRA (tyrosine phosphorylated). Interacts with CSF1R. Interacts (via SH2 and SH3 domain) with TNK2. Interacts (via protein kinase domain) with the tyrosine phosphorylated form of RUNX3 (via runt domain). Interacts with TRAF3 (via RING-type zinc finger domain). Interacts with RIGI, MAVS and TBK1. Interacts (via SH2 domain) with RACK1; the interaction is enhanced by tyrosine phosphorylation of RACK1 and inhibits SRC activity. Interacts with EPHB1; activates the MAPK/ERK cascade to regulate cell migration. Interacts with FCAMR. Interacts (via SH2 domain) with the 'Tyr-9' phosphorylated form of PDPK1. Interacts with AMOTL2; this interaction regulates the translocation of phosphorylated SRC to peripheral cell-matrix adhesion sites. Interacts with TRAP1. Interacts with CBLC; the interaction is enhanced when SRC is phosphorylated at Tyr-419. Interacts with ARHGEF5. Interacts (via cytoplasmic domain) with CEACAM1 (via SH2 domain); this interaction is regulated by trans-homophilic cell adhesion. Interacts with MPP2. Interacts with PRR7. Interacts (via kinase domain and to a lesser extent the SH2 domain) directly with PDLIM4; this interaction results in PTPN13-mediated dephosphorylation of this protein leading to its inactivation. Interacts with P85 (PIK3R1 or PIK3R2). Interacts with HNRNPA2B1. Interacts with IL6ST/gp130. Interacts (via SH3 domain) with PELP1 in the presence of 17-beta-estradiol. Interacts with AMBRA1. As to quaternary structure, (Microbial infection) Interacts with HEV ORF3 protein; via the SH3 domain. (Microbial infection) Interacts (via SH2 domain) with HCV non-structural protein 5A (via N-terminus). Myristoylated at Gly-2, and this is essential for targeting to membranes. Post-translationally, dephosphorylated at Tyr-530 by PTPRJ. Phosphorylated on Tyr-530 by c-Src kinase (CSK). The phosphorylated form is termed pp60c-src. Dephosphorylated by PTPRJ at Tyr-419. Normally maintained in an inactive conformation with the SH2 domain engaged with Tyr-530, the SH3 domain engaged with the SH2-kinase linker, and Tyr-419 dephosphorylated. Dephosphorylation of Tyr-530 as a result of protein tyrosine phosphatase (PTP) action disrupts the intramolecular interaction between the SH2 domain and Tyr-530, Tyr-419 can then become autophosphorylated, resulting in SRC activation. Phosphorylation of Tyr-530 by CSK allows this interaction to reform, resulting in SRC inactivation. CDK5-mediated phosphorylation at Ser-75 targets SRC to ubiquitin-dependent degradation and thus leads to cytoskeletal reorganization. Phosphorylated by PTK2/FAK1; this enhances kinase activity. Phosphorylated by PTK2B/PYK2; this enhances kinase activity. Upon activation of IL6ST by IL6, Tyr-419 is phosphorylated and Tyr-530 dephosphorylated. In terms of processing, displays reduced levels of autophosphorylation at Tyr-419 compared to isoforms 2 and 3. Displays enhanced levels of autophosphorylation at Tyr-419 compared to isoform 1. Post-translationally, displays enhanced levels of autophosphorylation at Tyr-419 compared to isoform 1. Shows reduced phosphorylation at Tyr-527 compared to isoforms 1 and 2. In terms of processing, S-nitrosylation is important for activation of its kinase activity. Ubiquitinated in response to CDK5-mediated phosphorylation. Ubiquitination mediated by CBLC requires SRC autophosphorylation at Tyr-419 and may lead to lysosomal degradation. In terms of tissue distribution, expressed ubiquitously. Expressed in the skin (at protein level). Platelets, neurons and osteoclasts express 5-fold to 200-fold higher levels than most other tissues. Expressed in spleen and liver. As to expression, expressed in brain.

Its subcellular location is the cell membrane. It is found in the mitochondrion inner membrane. The protein resides in the nucleus. It localises to the cytoplasm. The protein localises to the cytoskeleton. Its subcellular location is the perinuclear region. It is found in the cell junction. The protein resides in the focal adhesion. It catalyses the reaction L-tyrosyl-[protein] + ATP = O-phospho-L-tyrosyl-[protein] + ADP + H(+). With respect to regulation, phosphorylation by CSK at Tyr-530 inhibits kinase activity. Inhibitory phosphorylation at Tyr-530 is enhanced by heme. Further phosphorylation by CDK1 partially reactivates CSK-inactivated SRC and facilitates complete reactivation by protein tyrosine phosphatase PTPRC. Integrin engagement stimulates kinase activity. Phosphorylation by PTK2/FAK1 enhances kinase activity. Butein and pseudosubstrate-based peptide inhibitors like CIYKYYF act as inhibitors. Phosphorylation at Tyr-419 increases kinase activity. In terms of biological role, non-receptor protein tyrosine kinase which is activated following engagement of many different classes of cellular receptors including immune response receptors, integrins and other adhesion receptors, receptor protein tyrosine kinases, G protein-coupled receptors as well as cytokine receptors. Participates in signaling pathways that control a diverse spectrum of biological activities including gene transcription, immune response, cell adhesion, cell cycle progression, apoptosis, migration, and transformation. Due to functional redundancy between members of the SRC kinase family, identification of the specific role of each SRC kinase is very difficult. SRC appears to be one of the primary kinases activated following engagement of receptors and plays a role in the activation of other protein tyrosine kinase (PTK) families. Receptor clustering or dimerization leads to recruitment of SRC to the receptor complexes where it phosphorylates the tyrosine residues within the receptor cytoplasmic domains. Plays an important role in the regulation of cytoskeletal organization through phosphorylation of specific substrates such as AFAP1. Phosphorylation of AFAP1 allows the SRC SH2 domain to bind AFAP1 and to localize to actin filaments. Cytoskeletal reorganization is also controlled through the phosphorylation of cortactin (CTTN). When cells adhere via focal adhesions to the extracellular matrix, signals are transmitted by integrins into the cell resulting in tyrosine phosphorylation of a number of focal adhesion proteins, including PTK2/FAK1 and paxillin (PXN). In addition to phosphorylating focal adhesion proteins, SRC is also active at the sites of cell-cell contact adherens junctions and phosphorylates substrates such as beta-catenin (CTNNB1), delta-catenin (CTNND1), and plakoglobin (JUP). Another type of cell-cell junction, the gap junction, is also a target for SRC, which phosphorylates connexin-43 (GJA1). SRC is implicated in regulation of pre-mRNA-processing and phosphorylates RNA-binding proteins such as KHDRBS1. Phosphorylates PKP3 at 'Tyr-195' in response to reactive oxygen species, which may cause the release of PKP3 from desmosome cell junctions into the cytoplasm. Also plays a role in PDGF-mediated tyrosine phosphorylation of both STAT1 and STAT3, leading to increased DNA binding activity of these transcription factors. Involved in the RAS pathway through phosphorylation of RASA1 and RASGRF1. Plays a role in EGF-mediated calcium-activated chloride channel activation. Required for epidermal growth factor receptor (EGFR) internalization through phosphorylation of clathrin heavy chain (CLTC and CLTCL1) at 'Tyr-1477'. Involved in beta-arrestin (ARRB1 and ARRB2) desensitization through phosphorylation and activation of GRK2, leading to beta-arrestin phosphorylation and internalization. Has a critical role in the stimulation of the CDK20/MAPK3 mitogen-activated protein kinase cascade by epidermal growth factor. Might be involved not only in mediating the transduction of mitogenic signals at the level of the plasma membrane but also in controlling progression through the cell cycle via interaction with regulatory proteins in the nucleus. Plays an important role in osteoclastic bone resorption in conjunction with PTK2B/PYK2. Both the formation of a SRC-PTK2B/PYK2 complex and SRC kinase activity are necessary for this function. Recruited to activated integrins by PTK2B/PYK2, thereby phosphorylating CBL, which in turn induces the activation and recruitment of phosphatidylinositol 3-kinase to the cell membrane in a signaling pathway that is critical for osteoclast function. Promotes energy production in osteoclasts by activating mitochondrial cytochrome C oxidase. Phosphorylates DDR2 on tyrosine residues, thereby promoting its subsequent autophosphorylation. Phosphorylates RUNX3 and COX2 on tyrosine residues, TNK2 on 'Tyr-284' and CBL on 'Tyr-731'. Enhances RIGI-elicited antiviral signaling. Phosphorylates PDPK1 at 'Tyr-9', 'Tyr-373' and 'Tyr-376'. Phosphorylates BCAR1 at 'Tyr-128'. Phosphorylates CBLC at multiple tyrosine residues, phosphorylation at 'Tyr-341' activates CBLC E3 activity. Phosphorylates synaptic vesicle protein synaptophysin (SYP). Involved in anchorage-independent cell growth. Required for podosome formation. Mediates IL6 signaling by activating YAP1-NOTCH pathway to induce inflammation-induced epithelial regeneration. Phosphorylates OTUB1, promoting deubiquitination of RPTOR. Phosphorylates caspase CASP8 at 'Tyr-380' which negatively regulates CASP8 processing and activation, down-regulating CASP8 proapoptotic function. Non-receptor protein tyrosine kinase which phosphorylates synaptophysin with high affinity. Functionally, non-receptor protein tyrosine kinase which shows higher basal kinase activity than isoform 1, possibly due to weakened intramolecular interactions which enhance autophosphorylation of Tyr-419 and subsequent activation. The SH3 domain shows reduced affinity with the linker sequence between the SH2 and kinase domains which may account for the increased basal activity. Displays altered substrate specificity compared to isoform 1, showing weak affinity for synaptophysin and for peptide substrates containing class I or class II SH3 domain-binding motifs. Plays a role in L1CAM-mediated neurite elongation, possibly by acting downstream of L1CAM to drive cytoskeletal rearrangements involved in neurite outgrowth. Its function is as follows. Non-receptor protein tyrosine kinase which shows higher basal kinase activity than isoform 1, possibly due to weakened intramolecular interactions which enhance autophosphorylation of Tyr-419 and subsequent activation. The SH3 domain shows reduced affinity with the linker sequence between the SH2 and kinase domains which may account for the increased basal activity. Displays altered substrate specificity compared to isoform 1, showing weak affinity for synaptophysin and for peptide substrates containing class I or class II SH3 domain-binding motifs. Plays a role in neurite elongation. The protein is Proto-oncogene tyrosine-protein kinase Src of Homo sapiens (Human).